Here is a 314-residue protein sequence, read N- to C-terminus: Leucine-rich repeat-containing protein 59 (314 aa).

Topologically, residues 1–247 (MNKGKIENIK…VPKAKRSICS (247 aa)) are cytoplasmic. LRR repeat units follow at residues 14–35 (DGNE…ELAA), 38–60 (KATF…CSLT), 61–82 (HLIK…IGQL), 84–106 (NLQH…SQLK), and 107–126 (SLKW…AKAA). The stretch at 146–216 (MKVLQEEAEK…AVAAQEQQKK (71 aa)) forms a coiled coil. Disordered regions lie at residues 165-197 (REQE…KERK) and 212-237 (EQQK…APES). Over residues 215-225 (KKKKEEKKKKA) the composition is skewed to basic residues. The chain crosses the membrane as a helical span at residues 248-268 (LFFSLLLKLVLLLVIGVSSVV). The Lumenal portion of the chain corresponds to 269-314 (AVCQLTELRKEAFCIPLNVHFEETVRWAQGLDVVQQVIQKMSDLRT).

Interacts with SGO1.

It localises to the microsome membrane. The protein localises to the endoplasmic reticulum membrane. It is found in the nucleus envelope. Its function is as follows. Required for nuclear import of FGF1. The chain is Leucine-rich repeat-containing protein 59 (lrrc59) from Danio rerio (Zebrafish).